The primary structure comprises 213 residues: Phosphatidylserine decarboxylase proenzyme (213 aa).

Catalysis depends on Ser180, which acts as the Schiff-base intermediate with substrate; via pyruvic acid. Ser180 bears the Pyruvic acid (Ser); by autocatalysis mark.

The protein belongs to the phosphatidylserine decarboxylase family. PSD-A subfamily. In terms of assembly, heterodimer of a large membrane-associated beta subunit and a small pyruvoyl-containing alpha subunit. Pyruvate serves as cofactor. Is synthesized initially as an inactive proenzyme. Formation of the active enzyme involves a self-maturation process in which the active site pyruvoyl group is generated from an internal serine residue via an autocatalytic post-translational modification. Two non-identical subunits are generated from the proenzyme in this reaction, and the pyruvate is formed at the N-terminus of the alpha chain, which is derived from the carboxyl end of the proenzyme. The post-translation cleavage follows an unusual pathway, termed non-hydrolytic serinolysis, in which the side chain hydroxyl group of the serine supplies its oxygen atom to form the C-terminus of the beta chain, while the remainder of the serine residue undergoes an oxidative deamination to produce ammonia and the pyruvoyl prosthetic group on the alpha chain.

The protein localises to the cell membrane. It carries out the reaction a 1,2-diacyl-sn-glycero-3-phospho-L-serine + H(+) = a 1,2-diacyl-sn-glycero-3-phosphoethanolamine + CO2. It participates in phospholipid metabolism; phosphatidylethanolamine biosynthesis; phosphatidylethanolamine from CDP-diacylglycerol: step 2/2. Functionally, catalyzes the formation of phosphatidylethanolamine (PtdEtn) from phosphatidylserine (PtdSer). The chain is Phosphatidylserine decarboxylase proenzyme from Carboxydothermus hydrogenoformans (strain ATCC BAA-161 / DSM 6008 / Z-2901).